Reading from the N-terminus, the 203-residue chain is Imidazole glycerol phosphate synthase subunit HisH (203 aa).

Positions 1–203 constitute a Glutamine amidotransferase type-1 domain; that stretch reads MIGIIDYGMG…KNFGEMIKCL (203 aa). Cysteine 79 functions as the Nucleophile in the catalytic mechanism. Residues histidine 181 and glutamate 183 contribute to the active site.

As to quaternary structure, heterodimer of HisH and HisF.

Its subcellular location is the cytoplasm. The catalysed reaction is 5-[(5-phospho-1-deoxy-D-ribulos-1-ylimino)methylamino]-1-(5-phospho-beta-D-ribosyl)imidazole-4-carboxamide + L-glutamine = D-erythro-1-(imidazol-4-yl)glycerol 3-phosphate + 5-amino-1-(5-phospho-beta-D-ribosyl)imidazole-4-carboxamide + L-glutamate + H(+). It catalyses the reaction L-glutamine + H2O = L-glutamate + NH4(+). Its pathway is amino-acid biosynthesis; L-histidine biosynthesis; L-histidine from 5-phospho-alpha-D-ribose 1-diphosphate: step 5/9. In terms of biological role, IGPS catalyzes the conversion of PRFAR and glutamine to IGP, AICAR and glutamate. The HisH subunit catalyzes the hydrolysis of glutamine to glutamate and ammonia as part of the synthesis of IGP and AICAR. The resulting ammonia molecule is channeled to the active site of HisF. This is Imidazole glycerol phosphate synthase subunit HisH from Caldanaerobacter subterraneus subsp. tengcongensis (strain DSM 15242 / JCM 11007 / NBRC 100824 / MB4) (Thermoanaerobacter tengcongensis).